A 187-amino-acid polypeptide reads, in one-letter code: Large ribosomal subunit protein bL9 (187 aa).

A disordered region spans residues 168–187 (EEAPAEEDVAAEETSEAAEA).

It belongs to the bacterial ribosomal protein bL9 family.

Functionally, binds to the 23S rRNA. The protein is Large ribosomal subunit protein bL9 of Paramagnetospirillum magneticum (strain ATCC 700264 / AMB-1) (Magnetospirillum magneticum).